We begin with the raw amino-acid sequence, 202 residues long: uncharacterized protein (202 aa).

Residues Phe18–Ile38 traverse the membrane as a helical segment.

The protein localises to the membrane. This is an uncharacterized protein from Methanocaldococcus jannaschii (strain ATCC 43067 / DSM 2661 / JAL-1 / JCM 10045 / NBRC 100440) (Methanococcus jannaschii).